Reading from the N-terminus, the 437-residue chain is Phosphomethylpyrimidine synthase (437 aa).

Substrate contacts are provided by residues Asn69, Met98, Tyr127, His163, 185–187 (SRG), 226–229 (DALR), and Glu265. His269 is a Zn(2+) binding site. Residue Tyr292 coordinates substrate. His333 contacts Zn(2+). [4Fe-4S] cluster contacts are provided by Cys409, Cys412, and Cys416.

It belongs to the ThiC family. [4Fe-4S] cluster serves as cofactor.

It carries out the reaction 5-amino-1-(5-phospho-beta-D-ribosyl)imidazole + S-adenosyl-L-methionine = 4-amino-2-methyl-5-(phosphooxymethyl)pyrimidine + CO + 5'-deoxyadenosine + formate + L-methionine + 3 H(+). Its pathway is cofactor biosynthesis; thiamine diphosphate biosynthesis. Functionally, catalyzes the synthesis of the hydroxymethylpyrimidine phosphate (HMP-P) moiety of thiamine from aminoimidazole ribotide (AIR) in a radical S-adenosyl-L-methionine (SAM)-dependent reaction. In Alkaliphilus oremlandii (strain OhILAs) (Clostridium oremlandii (strain OhILAs)), this protein is Phosphomethylpyrimidine synthase.